We begin with the raw amino-acid sequence, 124 residues long: Small ribosomal subunit protein uS12 (124 aa).

3-methylthioaspartic acid is present on Asp89.

Belongs to the universal ribosomal protein uS12 family. As to quaternary structure, part of the 30S ribosomal subunit. Contacts proteins S8 and S17. May interact with IF1 in the 30S initiation complex.

Its function is as follows. With S4 and S5 plays an important role in translational accuracy. In terms of biological role, interacts with and stabilizes bases of the 16S rRNA that are involved in tRNA selection in the A site and with the mRNA backbone. Located at the interface of the 30S and 50S subunits, it traverses the body of the 30S subunit contacting proteins on the other side and probably holding the rRNA structure together. The combined cluster of proteins S8, S12 and S17 appears to hold together the shoulder and platform of the 30S subunit. In Buchnera aphidicola subsp. Acyrthosiphon pisum (strain 5A), this protein is Small ribosomal subunit protein uS12.